A 123-amino-acid polypeptide reads, in one-letter code: Small ribosomal subunit protein uS12 (123 aa).

Residues 1-22 (MATINQLVRKPRKRKAKTSDVR) form a disordered region. Asp89 is modified (3-methylthioaspartic acid). The tract at residues 101–123 (ALDTSGVNDRKRGRSKYGTKRPK) is disordered. Residues 111–123 (KRGRSKYGTKRPK) are compositionally biased toward basic residues.

The protein belongs to the universal ribosomal protein uS12 family. As to quaternary structure, part of the 30S ribosomal subunit. Contacts proteins S8 and S17. May interact with IF1 in the 30S initiation complex.

Its function is as follows. With S4 and S5 plays an important role in translational accuracy. Functionally, interacts with and stabilizes bases of the 16S rRNA that are involved in tRNA selection in the A site and with the mRNA backbone. Located at the interface of the 30S and 50S subunits, it traverses the body of the 30S subunit contacting proteins on the other side and probably holding the rRNA structure together. The combined cluster of proteins S8, S12 and S17 appears to hold together the shoulder and platform of the 30S subunit. In Teredinibacter turnerae (strain ATCC 39867 / T7901), this protein is Small ribosomal subunit protein uS12.